The primary structure comprises 424 residues: 3-phosphoshikimate 1-carboxyvinyltransferase (424 aa).

Positions 21, 22, and 26 each coordinate 3-phosphoshikimate. Lys21 contributes to the phosphoenolpyruvate binding site. Residues Gly92 and Arg120 each contribute to the phosphoenolpyruvate site. Ser163, Ser164, Gln165, Ser191, Asp306, and Lys333 together coordinate 3-phosphoshikimate. Gln165 serves as a coordination point for phosphoenolpyruvate. The active-site Proton acceptor is Asp306. Phosphoenolpyruvate-binding residues include Arg337, Arg379, and Lys405.

This sequence belongs to the EPSP synthase family. As to quaternary structure, monomer.

It localises to the cytoplasm. The catalysed reaction is 3-phosphoshikimate + phosphoenolpyruvate = 5-O-(1-carboxyvinyl)-3-phosphoshikimate + phosphate. It functions in the pathway metabolic intermediate biosynthesis; chorismate biosynthesis; chorismate from D-erythrose 4-phosphate and phosphoenolpyruvate: step 6/7. Its function is as follows. Catalyzes the transfer of the enolpyruvyl moiety of phosphoenolpyruvate (PEP) to the 5-hydroxyl of shikimate-3-phosphate (S3P) to produce enolpyruvyl shikimate-3-phosphate and inorganic phosphate. This is 3-phosphoshikimate 1-carboxyvinyltransferase from Clostridium perfringens (strain SM101 / Type A).